The following is a 213-amino-acid chain: uncharacterized protein (213 aa).

This is an uncharacterized protein from Escherichia coli (strain UTI89 / UPEC).